The sequence spans 1749 residues: Kinase non-catalytic C-lobe domain-containing protein 1 (1749 aa).

The KIND 1 domain maps to 37 to 217 (VSLADILSLR…QDVSESSWRE (181 aa)). 2 disordered regions span residues 210-275 (VSES…SHSR) and 361-435 (CRLW…ARQL). Basic and acidic residues-rich tracts occupy residues 363–373 (LWPEQEPEHQL) and 410–430 (ADPRDASGEAQTPRDDERIPE). Residues 444 to 608 (VSLQDLLSQL…RASICQVYQE (165 aa)) form the KIND 2 domain. Disordered regions lie at residues 689–871 (ARDQ…RPAD) and 962–1061 (QASP…GGAS). The segment covering 702 to 717 (ERGGQREGEGEEKLSL) has biased composition (basic and acidic residues). Low complexity-rich tracts occupy residues 739 to 748 (QGAAPEPLGA) and 766 to 779 (PANQPEGASSAAPG). Basic residues predominate over residues 823 to 833 (HGPRHPPKPPR). The span at 853 to 871 (GERDDQSPDSVPERPRPAD) shows a compositional bias: basic and acidic residues. Serine 964 is modified (phosphoserine). Residues 980-990 (SQSPRSPSSKR) are compositionally biased toward low complexity. Residues 1005 to 1019 (RTSSRAPCSPTSVSD) show a composition bias toward polar residues. Over residues 1040–1056 (VKAERAQQPEAGEDRRP) the composition is skewed to basic and acidic residues. A coiled-coil region spans residues 1133–1190 (QQLMMEKRNYRKTLKFYQKLLQKEKRNKGSDVKTMLSKLKGQLEEMKSRVQFLSLVKK). Residues 1246-1371 (KARILQAGTP…HLLGLLEVGM (126 aa)) form the N-terminal Ras-GEF domain. The Ras-GEF domain occupies 1468–1719 (STHQLFSQLT…SGADISTLAA (252 aa)).

In terms of assembly, interacts (via KIND2) with MAP2; the interaction enhances MAP2 phosphorylation and localizes KNDC1 to dendrites. As to expression, expressed specifically in the cerebral cortex.

Its subcellular location is the cell projection. It is found in the dendrite. It localises to the perikaryon. Functionally, RAS-Guanine nucleotide exchange factor (GEF) that controls the negative regulation of neuronal dendrite growth by mediating a signaling pathway linking RAS and MAP2. May be involved in cellular senescence. This Homo sapiens (Human) protein is Kinase non-catalytic C-lobe domain-containing protein 1.